The primary structure comprises 584 residues: Cation channel sperm-associated protein 2 (584 aa).

Over 1-106 (MAHERGHLQL…LWAGWVLDSS (106 aa)) the chain is Cytoplasmic. The helical transmembrane segment at 107 to 129 (IFSNFIISLIFLNTFVLMVEIEL) threads the bilayer. Over 130-138 (MNSTNTSLW) the chain is Extracellular. A helical membrane pass occupies residues 139–164 (PLKLALEVTDWFILLSFIVEILLMWL). Residues 165-173 (ASFFLFWKN) lie on the Cytoplasmic side of the membrane. The chain crosses the membrane as a helical span at residues 174-198 (AWSVFDFVVTMLSLLPEFVVLIGVS). Topologically, residues 199 to 201 (ADS) are extracellular. A helical transmembrane segment spans residues 202–220 (VWLQLLRVSRVLRSLKLFA). Topologically, residues 221-237 (RFPQIKVILLALVRALK) are cytoplasmic. Residues 238 to 260 (SMTFLLMLLLIFFYVFAVAGVYF) traverse the membrane as a helical segment. At 261–279 (FKEYSRSTIENLEYNMFFS) the chain is on the extracellular side. Positions 280–292 (DLLNSLVTVFILF) form an intramembrane region, helical; Pore-forming. Residues 293–312 (TLDHWYAVLQDVWKVPEASR) are Extracellular-facing. The chain crosses the membrane as a helical span at residues 313–339 (VFSSIYVILWLLLGSIIFRNIIVAMMV). Residues 340–584 (TNFQNIRNEL…VQALMNFEDK (245 aa)) are Cytoplasmic-facing. Over residues 376–386 (SESLRGTSQGK) the composition is skewed to polar residues. Disordered stretches follow at residues 376–460 (SESL…KGYT) and 480–510 (AGKAENEKVQKELKEKAYPGSPPNSSSHDEA). Composition is skewed to acidic residues over residues 390–418 (DITETSEATDEEKSEAEESEEEKSEEEKS) and 426–443 (EKNDEEKSDEEENDEEKS). 2 stretches are compositionally biased toward basic and acidic residues: residues 444 to 460 (DVEKSDEEKNDEEKGYT) and 483 to 496 (AENEKVQKELKEKA).

This sequence belongs to the cation channel sperm-associated (TC 1.A.1.19) family. As to quaternary structure, component of the CatSper complex or CatSpermasome composed of the core pore-forming members CATSPER1, CATSPER2, CATSPER3 and CATSPER4 as well as auxiliary members CATSPERB, CATSPERG, CATSPERD, CATSPERE, CATSPERZ, C2CD6/CATSPERT, SLCO6C1, TMEM249, TMEM262 and EFCAB9. HSPA1 may be an additional auxiliary complex member. The core complex members CATSPER1, CATSPER2, CATSPER3 and CATSPER4 form a heterotetrameric channel. The auxiliary CATSPERB, CATSPERG, CATSPERD and CATSPERE subunits form a pavilion-like structure over the pore which stabilizes the complex through interactions with CATSPER4, CATSPER3, CATSPER1 and CATSPER2 respectively. SLCO6C1 interacts with CATSPERE and TMEM262/CATSPERH interacts with CATSPERB, further stabilizing the complex. C2CD6/CATSPERT interacts at least with CATSPERD and is required for targeting the CatSper complex in the flagellar membrane. Interacts with Ca(v)3.3/CACNA1I, leading to suppression of T-type calcium channel activity.

The protein localises to the cell projection. The protein resides in the cilium. It localises to the flagellum membrane. The catalysed reaction is Ca(2+)(in) = Ca(2+)(out). Its activity is regulated as follows. Activated by intracellular alkalinization. Its function is as follows. Pore-forming subunit of the CatSper complex, a sperm-specific voltage-gated calcium channel that plays a central role in sperm cell hyperactivation. Controls calcium entry to mediate the hyperactivated motility, a step needed for sperm motility which is essential late in the preparation of sperm for fertilization. This is Cation channel sperm-associated protein 2 (Catsper2) from Rattus norvegicus (Rat).